Here is a 225-residue protein sequence, read N- to C-terminus: NAD(P)H-quinone oxidoreductase subunit K, chloroplastic (225 aa).

[4Fe-4S] cluster-binding residues include C43, C44, C108, and C139.

Belongs to the complex I 20 kDa subunit family. In terms of assembly, NDH is composed of at least 16 different subunits, 5 of which are encoded in the nucleus. The cofactor is [4Fe-4S] cluster.

It is found in the plastid. The protein resides in the chloroplast thylakoid membrane. The enzyme catalyses a plastoquinone + NADH + (n+1) H(+)(in) = a plastoquinol + NAD(+) + n H(+)(out). It carries out the reaction a plastoquinone + NADPH + (n+1) H(+)(in) = a plastoquinol + NADP(+) + n H(+)(out). Its function is as follows. NDH shuttles electrons from NAD(P)H:plastoquinone, via FMN and iron-sulfur (Fe-S) centers, to quinones in the photosynthetic chain and possibly in a chloroplast respiratory chain. The immediate electron acceptor for the enzyme in this species is believed to be plastoquinone. Couples the redox reaction to proton translocation, and thus conserves the redox energy in a proton gradient. This Brachypodium distachyon (Purple false brome) protein is NAD(P)H-quinone oxidoreductase subunit K, chloroplastic.